The chain runs to 874 residues: Coatomer subunit gamma-1 (874 aa).

A compositionally biased stretch (basic and acidic residues) spans 1–11; the sequence is MLKKFDKKDEE. The disordered stretch occupies residues 1 to 21; the sequence is MLKKFDKKDEESGGGSNPLQH. HEAT repeat units lie at residues 64–101, 283–320, 322–355, and 356–392; these read TEAT…IAED, KELA…KHPS, VTAC…GSES, and SIDR…KYPR. Position 594 is a phosphothreonine (Thr594). Residues 609–874 are interaction with ZNF289/ARFGAP2; it reads RQEIFQEQLA…PVDIILASVG (266 aa).

Belongs to the COPG family. As to quaternary structure, oligomeric complex that consists of at least the alpha, beta, beta', gamma, delta, epsilon and zeta subunits. Interacts with ZNF289/ARFGAP2 through its C-terminal appendage domain. Interacts with EGFR upon EGF treatment; interaction is essential for regulation of EGF-dependent nuclear transport of EGFR by retrograde trafficking from the Golgi to the ER. The coatomer interacts with KDEL receptors; the interaction is important for retrograde trafficking of KDEL-bearing proteins from the Golgi to the endoplasmic reticulum. Interacts with COPB1. Interacts with TMED10 (via C-terminus). Interacts with TMED2, TMED3, TMED7 and TMED9.

It is found in the cytoplasm. The protein resides in the cytosol. Its subcellular location is the golgi apparatus membrane. The protein localises to the cytoplasmic vesicle. It localises to the COPI-coated vesicle membrane. Its function is as follows. The coatomer is a cytosolic protein complex that binds to dilysine motifs and reversibly associates with Golgi non-clathrin-coated vesicles, which further mediate biosynthetic protein transport from the ER, via the Golgi up to the trans Golgi network. Coatomer complex is required for budding from Golgi membranes, and is essential for the retrograde Golgi-to-ER transport of dilysine-tagged proteins. In mammals, the coatomer can only be recruited by membranes associated to ADP-ribosylation factors (ARFs), which are small GTP-binding proteins; the complex also influences the Golgi structural integrity, as well as the processing, activity, and endocytic recycling of LDL receptors. Required for limiting lipid storage in lipid droplets. Involved in lipid homeostasis by regulating the presence of perilipin family members PLIN2 and PLIN3 at the lipid droplet surface and promoting the association of adipocyte triglyceride lipase (PNPLA2) with the lipid droplet surface to mediate lipolysis. The polypeptide is Coatomer subunit gamma-1 (Copg1) (Rattus norvegicus (Rat)).